The following is a 165-amino-acid chain: UBA-like domain-containing protein 2-B (165 aa).

The tract at residues Gln119 to Arg165 is disordered.

The protein belongs to the UBALD family.

The protein is UBA-like domain-containing protein 2-B (ubald2-b) of Xenopus laevis (African clawed frog).